The sequence spans 766 residues: Protein sak1 (766 aa).

The RFX-type winged-helix DNA-binding region spans 101-176; that stretch reads GICWLKRACE…YHYCGIKLRG (76 aa). 3 positions are modified to phosphoserine: serine 223, serine 224, and serine 227. Disordered regions lie at residues 271–308 and 708–731; these read PQAH…QPTY and LQEH…QQQQ. The segment covering 279 to 289 has biased composition (polar residues); sequence HLSQSNVPPQL. 2 stretches are compositionally biased toward low complexity: residues 290–308 and 715–731; these read SHSS…QPTY and QQHF…QQQQ.

It belongs to the RFX family.

Its subcellular location is the nucleus. Positively regulates cyclic AMP-dependent protein kinase-mediated exit from the mitotic cell cycle. The polypeptide is Protein sak1 (sak1) (Schizosaccharomyces pombe (strain 972 / ATCC 24843) (Fission yeast)).